A 405-amino-acid chain; its full sequence is Corticosteroid-binding globulin (405 aa).

Residues 1–22 (MPLLLYTCLLWLPTSGLWTVQA) form the signal peptide. Residues N31, N96, and N176 are each glycosylated (N-linked (GlcNAc...) asparagine). Q254 serves as a coordination point for cortisol. The N-linked (GlcNAc...) asparagine glycan is linked to N260. N286 provides a ligand contact to cortisol. 2 N-linked (GlcNAc...) asparagine glycosylation sites follow: N330 and N369. Residues H390 and W393 each coordinate cortisol.

This sequence belongs to the serpin family. In terms of processing, N-glycosylated; binds 5 oligosaccharide chains. Post-translationally, glycosylation in position Asn-260 is needed for steroid binding. In terms of tissue distribution, plasma; synthesized in liver. Has also been identified in a number of glycocorticoid responsive cells.

Its subcellular location is the secreted. Major transport protein for glucocorticoids and progestins in the blood of almost all vertebrate species. This Homo sapiens (Human) protein is Corticosteroid-binding globulin (SERPINA6).